The sequence spans 187 residues: MSAKIDITGDWTVAVYCAASPTHAELLELAAEVGAAIAGRGWTLVWGGGHVSAMGAVASAARACGGWTVGVIPKMLVYRELADHDADELIVTDTMWERKQIMEDRSDAFIVLPGGVGTLDELFDAWTDGYLGTHDKPIVMVDPWGHFDGLRAWLNGLLDTGYVSPTAMERLVVVDNVKDALRACAPS.

Lys-74 participates in a covalent cross-link: Isoglutamyl lysine isopeptide (Lys-Gln) (interchain with Q-Cter in protein Pup). Residues Glu-80, 98–99 (RK), 115–121 (GVGTLDE), and Thr-127 each bind substrate.

It belongs to the LOG family. Homodimer. Pupylated at Lys-74 by the prokaryotic ubiquitin-like protein Pup, which leads to its degradation by the proteasome. The proteasomal control of cytokinin synthesis is essential to protect M.tuberculosis against host-produced NO.

It catalyses the reaction N(6)-(dimethylallyl)adenosine 5'-phosphate + H2O = N(6)-dimethylallyladenine + D-ribose 5-phosphate. It carries out the reaction 9-ribosyl-trans-zeatin 5'-phosphate + H2O = trans-zeatin + D-ribose 5-phosphate. Its function is as follows. Catalyzes the hydrolytic removal of ribose 5'-monophosphate from nitrogen N6-modified adenosines, the final step of bioactive cytokinin synthesis. Is involved in the synthesis of isopentenyladenine (iP) and 2-methylthio-iP (2MeS-iP), the most abundant cytokinins detected in M.tuberculosis lysates and supernatants. Is also able to convert trans-zeatin-riboside monophosphate (tZRMP) to trans-zeatin (tZ) in vitro; however, it may not be involved in the biosynthesis of this minor cytokinin in vivo. Accumulation of Rv1205 sensitizes M.tuberculosis to nitric oxide since cytokinin breakdown products synergize with NO to kill M.tuberculosis. Shows a slow AMP hydrolase activity, but is not able to hydrolyze ATP. Displays no lysine decarboxylase (LDC) activity (L-lysine conversion to cadaverine). The polypeptide is Cytokinin riboside 5'-monophosphate phosphoribohydrolase (Mycobacterium tuberculosis (strain ATCC 25618 / H37Rv)).